Here is a 650-residue protein sequence, read N- to C-terminus: Chaperone protein HtpG (650 aa).

The a; substrate-binding stretch occupies residues 1 to 349 (MTKTTKKFET…SSDLPLNVSR (349 aa)). The b stretch occupies residues 350–566 (EILQEDVQIK…EHGLNANMER (217 aa)). Residues 567–650 (ILRAMNQDVP…VADGKAAAGE (84 aa)) form a c region.

It belongs to the heat shock protein 90 family. As to quaternary structure, homodimer.

The protein resides in the cytoplasm. Molecular chaperone. Has ATPase activity. This is Chaperone protein HtpG from Geobacter metallireducens (strain ATCC 53774 / DSM 7210 / GS-15).